The primary structure comprises 309 residues: Bombesin receptor-activated protein C6orf89 homolog (309 aa).

Residues 1–59 (MGSSLSEPCIYDKLSESIDILRQSGYRYGMSEREIEKFIKQVLETNEPRREPPQFPILR) lie on the Cytoplasmic side of the membrane. Residues 60–80 (ATVKFVVAVGVVLMAVLVFTY) traverse the membrane as a helical segment. Residues 81-309 (PQSPVLMGSV…QDVQCDSAVL (229 aa)) lie on the Extracellular side of the membrane.

In terms of assembly, homodimer.

The protein resides in the golgi apparatus membrane. It is found in the cytoplasm. In terms of biological role, exhibits histone deacetylase (HDAC) enhancer properties. May play a role in progression through the cell cycle. The protein is Bombesin receptor-activated protein C6orf89 homolog of Danio rerio (Zebrafish).